A 476-amino-acid polypeptide reads, in one-letter code: Ribosomal RNA small subunit methyltransferase F (476 aa).

Residues 125–131, Glu149, Asp176, and Asp194 each bind S-adenosyl-L-methionine; that span reads AAAPGSK. Catalysis depends on Cys247, which acts as the Nucleophile.

Belongs to the class I-like SAM-binding methyltransferase superfamily. RsmB/NOP family.

The protein localises to the cytoplasm. The catalysed reaction is cytidine(1407) in 16S rRNA + S-adenosyl-L-methionine = 5-methylcytidine(1407) in 16S rRNA + S-adenosyl-L-homocysteine + H(+). Specifically methylates the cytosine at position 1407 (m5C1407) of 16S rRNA. The sequence is that of Ribosomal RNA small subunit methyltransferase F from Aeromonas salmonicida (strain A449).